The chain runs to 893 residues: UPF0182 protein CLI_0022 (893 aa).

7 helical membrane-spanning segments follow: residues 9-29 (IPLFIIILFIAFFNKIINFII), 49-69 (AIIILMIPIFIIFFISIWMYY), 94-114 (LFFIFNFIVSIFLAYIFSSSY), 154-174 (VIISLLLFLVITTFIAYFILE), 202-222 (LAIVSGLIILFISFGHLIKIW), 246-266 (FYKIIVVITLISSIVTLLSIV), and 273-293 (VSICIGITIFLIVSQNIASFL).

It belongs to the UPF0182 family.

It localises to the cell membrane. This is UPF0182 protein CLI_0022 from Clostridium botulinum (strain Langeland / NCTC 10281 / Type F).